Here is a 670-residue protein sequence, read N- to C-terminus: NADH-ubiquinone oxidoreductase chain 5 (670 aa).

The next 19 membrane-spanning stretches (helical) occupy residues 1–21 (MYIV…IFGH), 31–51 (IAVG…YEIL), 81–101 (LTSI…LYSM), 111–131 (TRFF…VTAD), 133–153 (FVQL…LINF), 178–198 (LFFG…SVIF), 211–231 (LLGY…IGVV), 251–271 (TPVS…FLVL), 283–303 (ILNI…TIGI), 311–331 (VIAY…GLLN), 339–359 (LTTH…VIHG), 375–395 (LMPL…GFPF), 421–441 (AIIG…LLIL), 462–482 (TNMV…GYVT), 519–539 (LLPL…YFNI), 566–586 (FDFL…YDVM), 594–614 (LWEK…FTAL), 629–649 (IVQT…TGFI), and 650–670 (YMEL…IKID).

This sequence belongs to the complex I subunit 5 family.

The protein localises to the mitochondrion inner membrane. It carries out the reaction a ubiquinone + NADH + 5 H(+)(in) = a ubiquinol + NAD(+) + 4 H(+)(out). In terms of biological role, core subunit of the mitochondrial membrane respiratory chain NADH dehydrogenase (Complex I) that is believed to belong to the minimal assembly required for catalysis. Complex I functions in the transfer of electrons from NADH to the respiratory chain. The immediate electron acceptor for the enzyme is believed to be ubiquinone. The protein is NADH-ubiquinone oxidoreductase chain 5 (nad5) of Dictyostelium discoideum (Social amoeba).